The following is a 360-amino-acid chain: Thiol protease SEN102 (360 aa).

The N-terminal stretch at 1–20 is a signal peptide; it reads MAKPKFIALALVALSFLSIA. Residues 21–133 constitute a propeptide, activation peptide; sequence QSIPFTEKDL…ENVGSLPAAS (113 aa). 3 disulfides stabilise this stretch: Cys-151/Cys-193, Cys-185/Cys-225, and Cys-283/Cys-335. Cys-154 is an active-site residue. Residues His-289 and Asn-310 contribute to the active site. Asn-353 is a glycosylation site (N-linked (GlcNAc...) asparagine). Positions 357–360 match the Prevents secretion from ER motif; sequence RDEL.

Belongs to the peptidase C1 family.

It is found in the endoplasmic reticulum lumen. In Hemerocallis sp. (Daylily), this protein is Thiol protease SEN102 (SEN102).